A 357-amino-acid polypeptide reads, in one-letter code: Peptide chain release factor 1 (357 aa).

At Gln233 the chain carries N5-methylglutamine.

This sequence belongs to the prokaryotic/mitochondrial release factor family. In terms of processing, methylated by PrmC. Methylation increases the termination efficiency of RF1.

Its subcellular location is the cytoplasm. Its function is as follows. Peptide chain release factor 1 directs the termination of translation in response to the peptide chain termination codons UAG and UAA. The protein is Peptide chain release factor 1 of Leuconostoc citreum (strain KM20).